We begin with the raw amino-acid sequence, 418 residues long: uncharacterized protein (418 aa).

This is an uncharacterized protein from Saccharomyces cerevisiae (strain ATCC 204508 / S288c) (Baker's yeast).